We begin with the raw amino-acid sequence, 110 residues long: Serum amyloid A protein (110 aa).

The tract at residues G73 to Y110 is disordered. Over residues R93 to Y110 the composition is skewed to basic and acidic residues.

The protein belongs to the SAA family. This protein is the precursor of amyloid protein A, which is formed by the removal of residues from the C-terminal end. As to expression, expressed by the liver; secreted in plasma.

In terms of biological role, major acute phase reactant. Apolipoprotein of the HDL complex. The polypeptide is Serum amyloid A protein (SAA1) (Equus caballus (Horse)).